A 444-amino-acid chain; its full sequence is Phosphoribosylamine--glycine ligase (444 aa).

In terms of domain architecture, ATP-grasp spans 109 to 324 (RNLFKKYEID…FLDVCFAIAE (216 aa)). An ATP-binding site is contributed by 140 to 202 (MTSLGKDVVV…EEKLVGVEFT (63 aa)). Gln-282, Glu-294, and Asn-296 together coordinate Mg(2+). The Mn(2+) site is built by Gln-282, Glu-294, and Asn-296.

This sequence belongs to the GARS family. Mg(2+) serves as cofactor. It depends on Mn(2+) as a cofactor.

The enzyme catalyses 5-phospho-beta-D-ribosylamine + glycine + ATP = N(1)-(5-phospho-beta-D-ribosyl)glycinamide + ADP + phosphate + H(+). The protein operates within purine metabolism; IMP biosynthesis via de novo pathway; N(1)-(5-phospho-D-ribosyl)glycinamide from 5-phospho-alpha-D-ribose 1-diphosphate: step 2/2. This Methanococcus maripaludis (strain DSM 14266 / JCM 13030 / NBRC 101832 / S2 / LL) protein is Phosphoribosylamine--glycine ligase.